A 299-amino-acid polypeptide reads, in one-letter code: tRNA dimethylallyltransferase (299 aa).

13–20 (GPTASGKT) contacts ATP. A substrate-binding site is contributed by 15-20 (TASGKT). The segment at 38 to 41 (DSRQ) is interaction with substrate tRNA.

Belongs to the IPP transferase family. As to quaternary structure, monomer. Mg(2+) serves as cofactor.

It catalyses the reaction adenosine(37) in tRNA + dimethylallyl diphosphate = N(6)-dimethylallyladenosine(37) in tRNA + diphosphate. Functionally, catalyzes the transfer of a dimethylallyl group onto the adenine at position 37 in tRNAs that read codons beginning with uridine, leading to the formation of N6-(dimethylallyl)adenosine (i(6)A). This Prochlorococcus marinus (strain AS9601) protein is tRNA dimethylallyltransferase.